The chain runs to 315 residues: Vomeronasal type-1 receptor 54 (315 aa).

Residues 1 to 15 (MNKMNRLSHNTEIRN) lie on the Extracellular side of the membrane. A helical transmembrane segment spans residues 16–40 (AIYSGVGIGISGNSFLLLFHIFKYI). The Cytoplasmic portion of the chain corresponds to 41 to 51 (RGQRSRHIDLP). Residues 52–71 (IGLLSLIHLVMLIAMSLVAT) form a helical membrane-spanning segment. Over 72 to 90 (DIFMPWGRWGDTTCKCVIS) the chain is Extracellular. An intrachain disulfide couples Cys85 to Cys172. A helical membrane pass occupies residues 91 to 112 (LYRFCRSLSLCATSLLSILQAV). Topologically, residues 113–132 (TLNPRNSCLEKFKRKSPHYM) are cytoplasmic. A helical transmembrane segment spans residues 133–154 (LGCLLFLSVFYTFISSPLATYI). Topologically, residues 155–193 (TAKSNLTSPSFTYITTSCSLAPMSYSFHLTVFILLTSRD) are extracellular. The chain crosses the membrane as a helical span at residues 194 to 212 (VIFVGLMLLSSGYMVTFLG). At 213–239 (RHKKQSQFLHITSFSLKPSAEKRAMRT) the chain is on the cytoplasmic side. Residues 240–260 (ILCLMSFFVLMYTLDSIVSYI) form a helical membrane-spanning segment. The Extracellular segment spans residues 261–267 (RSIDDGQ). A helical membrane pass occupies residues 268 to 288 (IFYCVHIFTAHGYATVSPFLI). Over 289 to 315 (LSTEKYIINIFRSTFGRMVTIILLRNR) the chain is Cytoplasmic.

The protein belongs to the G-protein coupled receptor 1 family.

The protein resides in the cell membrane. Its function is as follows. Putative pheromone receptor implicated in the regulation of social and reproductive behavior. The sequence is that of Vomeronasal type-1 receptor 54 (Vmn1r54) from Mus musculus (Mouse).